We begin with the raw amino-acid sequence, 152 residues long: Small ribosomal subunit protein uS15 (152 aa).

Basic residues predominate over residues 1 to 11 (MARMHARRRGK). The disordered stretch occupies residues 1–25 (MARMHARRRGKSSSVRPARNEAPAW).

This sequence belongs to the universal ribosomal protein uS15 family. As to quaternary structure, part of the 30S ribosomal subunit.

This is Small ribosomal subunit protein uS15 from Methanoregula boonei (strain DSM 21154 / JCM 14090 / 6A8).